The chain runs to 220 residues: Urease accessory protein UreF (220 aa).

It belongs to the UreF family. UreD, UreF and UreG form a complex that acts as a GTP-hydrolysis-dependent molecular chaperone, activating the urease apoprotein by helping to assemble the nickel containing metallocenter of UreC. The UreE protein probably delivers the nickel.

The protein resides in the cytoplasm. Its function is as follows. Required for maturation of urease via the functional incorporation of the urease nickel metallocenter. The protein is Urease accessory protein UreF of Bordetella bronchiseptica (strain ATCC BAA-588 / NCTC 13252 / RB50) (Alcaligenes bronchisepticus).